Consider the following 510-residue polypeptide: Light-independent protochlorophyllide reductase subunit B (510 aa).

Residue D36 participates in [4Fe-4S] cluster binding. The active-site Proton donor is D297. Position 432-433 (432-433 (GM)) interacts with substrate.

Belongs to the ChlB/BchB/BchZ family. Protochlorophyllide reductase is composed of three subunits; ChlL, ChlN and ChlB. Forms a heterotetramer of two ChlB and two ChlN subunits. The cofactor is [4Fe-4S] cluster.

The protein localises to the plastid. Its subcellular location is the chloroplast. The catalysed reaction is chlorophyllide a + oxidized 2[4Fe-4S]-[ferredoxin] + 2 ADP + 2 phosphate = protochlorophyllide a + reduced 2[4Fe-4S]-[ferredoxin] + 2 ATP + 2 H2O. The protein operates within porphyrin-containing compound metabolism; chlorophyll biosynthesis (light-independent). Its function is as follows. Component of the dark-operative protochlorophyllide reductase (DPOR) that uses Mg-ATP and reduced ferredoxin to reduce ring D of protochlorophyllide (Pchlide) to form chlorophyllide a (Chlide). This reaction is light-independent. The NB-protein (ChlN-ChlB) is the catalytic component of the complex. The chain is Light-independent protochlorophyllide reductase subunit B from Pinus koraiensis (Korean pine).